A 509-amino-acid polypeptide reads, in one-letter code: MDIRAAEISAILKEQIKNFGQEAEVTEVGQVLAVGDGIARVYGLDNVQAGEMVEFESGVRGMALNLEQDNVGVVIFGSDREIKEGQTVKRTGSIVDVPVGKGLLGRVVDGLGNPIDGKGPIQSTERRRVDVKAPGIIPRKSVHEPMSTGLKAIDALIPVGRGQRELIIGDRQTGKTAIALDTILNQKSAHAGADENAKLYCVYVAIGQKRSTVAQFVKVLEDQGALEYSIVIAATASDAAPMQFIAPFAGCAMGEYFRDNGMHAVIVYDDLSKQAVAYRQMSLLLRRPPGREAYPGDVFYLHSRLLERAAKMGDAAGNGSLTALPVIETQANDVSAYIPTNVISITDGQIFLETDLFYQGVRPAVNVGLSVSRVGSSAQTKAMKKVAGKIKGELAQYREMAAFAQFGSDLDVSTQRLLNRGARLTELLKQPQFSPLKMEEQVAVIYAGVNGYLDKLPVGKVRAFEEQLLGTLRSKHQDWLNAVRDSKDLSDANANTLKGVVEATAKSFA.

169 to 176 is a binding site for ATP; sequence GDRQTGKT.

Belongs to the ATPase alpha/beta chains family. As to quaternary structure, F-type ATPases have 2 components, CF(1) - the catalytic core - and CF(0) - the membrane proton channel. CF(1) has five subunits: alpha(3), beta(3), gamma(1), delta(1), epsilon(1). CF(0) has three main subunits: a(1), b(2) and c(9-12). The alpha and beta chains form an alternating ring which encloses part of the gamma chain. CF(1) is attached to CF(0) by a central stalk formed by the gamma and epsilon chains, while a peripheral stalk is formed by the delta and b chains.

It is found in the cell inner membrane. The enzyme catalyses ATP + H2O + 4 H(+)(in) = ADP + phosphate + 5 H(+)(out). Functionally, produces ATP from ADP in the presence of a proton gradient across the membrane. The alpha chain is a regulatory subunit. The protein is ATP synthase subunit alpha of Methylorubrum extorquens (strain CM4 / NCIMB 13688) (Methylobacterium extorquens).